Here is a 685-residue protein sequence, read N- to C-terminus: DNA-directed RNA polymerase subunit beta' (685 aa).

Residues cysteine 69, cysteine 71, cysteine 87, and cysteine 90 each contribute to the Zn(2+) site. Positions 489, 491, and 493 each coordinate Mg(2+).

It belongs to the RNA polymerase beta' chain family. RpoC1 subfamily. As to quaternary structure, in plastids the minimal PEP RNA polymerase catalytic core is composed of four subunits: alpha, beta, beta', and beta''. When a (nuclear-encoded) sigma factor is associated with the core the holoenzyme is formed, which can initiate transcription. Mg(2+) serves as cofactor. It depends on Zn(2+) as a cofactor.

The protein resides in the plastid. It localises to the chloroplast. It carries out the reaction RNA(n) + a ribonucleoside 5'-triphosphate = RNA(n+1) + diphosphate. Its function is as follows. DNA-dependent RNA polymerase catalyzes the transcription of DNA into RNA using the four ribonucleoside triphosphates as substrates. The polypeptide is DNA-directed RNA polymerase subunit beta' (Gossypium hirsutum (Upland cotton)).